The sequence spans 497 residues: Lysine--tRNA ligase (497 aa).

Residues Glu-409 and Glu-416 each contribute to the Mg(2+) site.

It belongs to the class-II aminoacyl-tRNA synthetase family. Homodimer. Mg(2+) is required as a cofactor.

Its subcellular location is the cytoplasm. The enzyme catalyses tRNA(Lys) + L-lysine + ATP = L-lysyl-tRNA(Lys) + AMP + diphosphate. The chain is Lysine--tRNA ligase from Streptococcus pyogenes serotype M6 (strain ATCC BAA-946 / MGAS10394).